The sequence spans 88 residues: MAHKKGVGSSRNGRDSQPKMLGVKRADGQFVLAGSILVRQRGTRIHPGRNVGRGGDDTLFAKVDGVVSFERSGRDKKTVSVIPVEAAL.

The tract at residues 1-21 (MAHKKGVGSSRNGRDSQPKML) is disordered.

Belongs to the bacterial ribosomal protein bL27 family.

This chain is Large ribosomal subunit protein bL27, found in Pelotomaculum thermopropionicum (strain DSM 13744 / JCM 10971 / SI).